The chain runs to 462 residues: ATP synthase subunit beta (462 aa).

151–158 provides a ligand contact to ATP; it reads GGAGVGKT.

It belongs to the ATPase alpha/beta chains family. As to quaternary structure, F-type ATPases have 2 components, CF(1) - the catalytic core - and CF(0) - the membrane proton channel. CF(1) has five subunits: alpha(3), beta(3), gamma(1), delta(1), epsilon(1). CF(0) has four main subunits: a(1), b(1), b'(1) and c(9-12).

The protein resides in the cell inner membrane. The enzyme catalyses ATP + H2O + 4 H(+)(in) = ADP + phosphate + 5 H(+)(out). In terms of biological role, produces ATP from ADP in the presence of a proton gradient across the membrane. The catalytic sites are hosted primarily by the beta subunits. The polypeptide is ATP synthase subunit beta (Chlorobium phaeobacteroides (strain BS1)).